We begin with the raw amino-acid sequence, 513 residues long: Aspartyl protease family protein 1 (513 aa).

Residues 1 to 21 (MVWYSSCRILFLGLLILLASS) form the signal peptide. One can recognise a Peptidase A1 domain in the interval 104–445 (HYANVTVGTP…DREKLILGWK (342 aa)). Active-site residues include Asp122 and Asp327. The disordered stretch occupies residues 452–488 (GETSARTLPSNRSSSSARPPASSFDPEATNIPSQRPN). The segment covering 455–474 (SARTLPSNRSSSSARPPASS) has biased composition (low complexity). The GPI-anchor amidated serine moiety is linked to residue Ser484. A propeptide spans 485-513 (QRPNTSTTSAAYSLSISLSLFFFSILAIL) (removed in mature form).

This sequence belongs to the peptidase A1 family.

The protein localises to the cell membrane. In terms of biological role, aspartyl protease. Not able to cleave BAG6. The polypeptide is Aspartyl protease family protein 1 (Arabidopsis thaliana (Mouse-ear cress)).